The primary structure comprises 286 residues: Translocon-associated protein subunit alpha (286 aa).

Positions 1 to 21 (MRLLPRLLLLFLLAFPAAVLL) are cleaved as a signal peptide. The Lumenal segment spans residues 22–207 (RGGPGGSLAL…EREDGLDGET (186 aa)). The span at 46-75 (IIEDEDDEAEVEEDEPTDLAEDKEEEDVSS) shows a compositional bias: acidic residues. The tract at residues 46–83 (IIEDEDDEAEVEEDEPTDLAEDKEEEDVSSEPEASPSA) is disordered. 2 N-linked (GlcNAc...) asparagine glycosylation sites follow: asparagine 136 and asparagine 191. Residues 208–228 (IFMYMFLAGLGLLVVVGLHQL) traverse the membrane as a helical segment. The Cytoplasmic segment spans residues 229-286 (LESRKRKRPIQKVEMGTSSQNDVDMSWIPQETLNQINKASPRRQPRKRAQKRSVGSDE). The tract at residues 236 to 286 (RPIQKVEMGTSSQNDVDMSWIPQETLNQINKASPRRQPRKRAQKRSVGSDE) is disordered. A compositionally biased stretch (polar residues) spans 244–266 (GTSSQNDVDMSWIPQETLNQINK). A Phosphoserine modification is found at serine 247. The residue at position 260 (threonine 260) is a Phosphothreonine. Serine 268 bears the Phosphoserine mark. The segment covering 268–279 (SPRRQPRKRAQK) has biased composition (basic residues).

It belongs to the TRAP-alpha family. In terms of assembly, heterotetramer of TRAP-alpha, TRAP-beta, TRAP-delta and TRAP-gamma. Interacts with palmitoylated calnexin (CALX), the interaction is required for efficient folding of glycosylated proteins.

It localises to the endoplasmic reticulum membrane. Its function is as follows. TRAP proteins are part of a complex whose function is to bind calcium to the ER membrane and thereby regulate the retention of ER resident proteins. May be involved in the recycling of the translocation apparatus after completion of the translocation process or may function as a membrane-bound chaperone facilitating folding of translocated proteins. The sequence is that of Translocon-associated protein subunit alpha (Ssr1) from Mus musculus (Mouse).